The primary structure comprises 403 residues: Pyruvate, phosphate dikinase regulatory protein 1, chloroplastic (403 aa).

The N-terminal 86 residues, 1-86 (MALLSAMKLQ…NTTGPMRPIE (86 aa)), are a transit peptide targeting the chloroplast. Positions 1 to 108 (MALLSAMKLQ…DVSSSSNGVS (108 aa)) are disordered. 3 stretches are compositionally biased toward low complexity: residues 17-26 (SSNLNPNSKP), 69-80 (STITNGSNNTTG), and 87-108 (SSSRTDVSTLDSDVSSSSNGVS). 269-276 (GVSRTGKT) lines the ADP pocket.

It belongs to the pyruvate, phosphate/water dikinase regulatory protein family. PDRP subfamily. Interacts with PPDK1. In terms of tissue distribution, expressed in green tissues.

The protein localises to the plastid. It is found in the chloroplast stroma. The enzyme catalyses N(tele)-phospho-L-histidyl/L-threonyl-[pyruvate, phosphate dikinase] + ADP = N(tele)-phospho-L-histidyl/O-phospho-L-threonyl-[pyruvate, phosphate dikinase] + AMP + H(+). It carries out the reaction N(tele)-phospho-L-histidyl/O-phospho-L-threonyl-[pyruvate, phosphate dikinase] + phosphate + H(+) = N(tele)-phospho-L-histidyl/L-threonyl-[pyruvate, phosphate dikinase] + diphosphate. Regulated by light/dark exposure. Functionally, bifunctional serine/threonine kinase and phosphorylase involved in the dark/light-mediated regulation of PPDK by catalyzing its phosphorylation/dephosphorylation. Dark/light-induced changes in stromal concentrations of the competing ADP and Pi substrates govern the direction of the reaction. In the dark, phosphorylates the catalytic intermediate of PPDK (PPDK-HisP), inactivating it. Light exposure induces the phosphorolysis reaction that reactivates PPDK. Unlike the kinase function which can utilize either Thr or Ser as target, the phosphorylase function has a strict substrate requirement for threonyl phosphate. The sequence is that of Pyruvate, phosphate dikinase regulatory protein 1, chloroplastic (RP1) from Arabidopsis thaliana (Mouse-ear cress).